The following is a 245-amino-acid chain: Protein mlo1 (245 aa).

In terms of domain architecture, SAP spans 4–38; it reads YKSLKVAELREKLAEKGLSTAGNKAELVSRLTAAT. Residues 32–245 form a disordered region; sequence SRLTAATESN…AERFGVAAKN (214 aa). Positions 37–52 are enriched in low complexity; that stretch reads ATESNDENTSNNNATD. Residues 58-70 show a composition bias toward acidic residues; the sequence is PPEDDIDWGDMEN. Over residues 109 to 118 the composition is skewed to polar residues; that stretch reads TSQAPETSTG. The span at 119-130 shows a compositional bias: basic and acidic residues; it reads AEEHQETTEESK. The residue at position 139 (S139) is a Phosphoserine. The span at 182 to 196 shows a compositional bias: low complexity; the sequence is SSNNKNHNQSKNPQN.

This sequence belongs to the SAP domain-containing ribonucleoprotein family.

This chain is Protein mlo1 (mlo1), found in Schizosaccharomyces pombe (strain 972 / ATCC 24843) (Fission yeast).